Consider the following 435-residue polypeptide: Bystin (435 aa).

The interval 1–102 is disordered; sequence MPKFKAARGA…VPQDGSDDEE (102 aa). Residue Arg40 is modified to Omega-N-methylarginine. Positions 71–87 are enriched in basic and acidic residues; it reads AEHGSGDRPAVPRERTT. Position 98 is a phosphoserine (Ser98). A Phosphothreonine modification is found at Thr154. Phosphoserine is present on residues Ser165 and Ser412.

This sequence belongs to the bystin family. Binds trophinin, tastin and cytokeratins.

The protein resides in the cytoplasm. It is found in the nucleus. Its subcellular location is the nucleolus. Functionally, required for processing of 20S pre-rRNA precursor and biogenesis of 40S ribosomal subunits. This Bos taurus (Bovine) protein is Bystin (BYSL).